The following is a 139-amino-acid chain: uncharacterized protein (139 aa).

The next 3 membrane-spanning stretches (helical) occupy residues 38–60 (YFLH…LYVF), 72–94 (FIIL…CAGS), and 114–136 (ITVV…LIVA).

Its subcellular location is the cell membrane. This is an uncharacterized protein from Treponema pallidum (strain Nichols).